We begin with the raw amino-acid sequence, 369 residues long: MHGESPIKRRESRKIWVGNVPVGGDAPIAVQSMTNTDTNDVAATVGQIQRLVDAGVDIVRVSVPDMDAAEAFGKIKQLVSVPLVADIHFDYKIALRVAELGVDCLRINPGNIGREDRVRAVVDAARDRGIPIRIGVNAGSLEKDLQKKYGEPTPAALVESALRHVEHLDRLDFQDFKVSVKASDVFMAVEAYRLLAKQIIQPLHLGITEAGGLRSGTVKSAVGLGMLLAEGIGDTIRISLAADPVEEVKVGYDILKSLHLRSRGINFIACPSCSRQNFDVVKTMNELEGRLEDLLVPLDVAVIGCVVNGPGEAKEAHVGLTGGTPNLIYIDGKPAQKLTNDNLVDELEKLIRQKAAEKVEADAALIARG.

The [4Fe-4S] cluster site is built by C270, C273, C305, and E312.

This sequence belongs to the IspG family. [4Fe-4S] cluster serves as cofactor.

The catalysed reaction is (2E)-4-hydroxy-3-methylbut-2-enyl diphosphate + oxidized [flavodoxin] + H2O + 2 H(+) = 2-C-methyl-D-erythritol 2,4-cyclic diphosphate + reduced [flavodoxin]. The protein operates within isoprenoid biosynthesis; isopentenyl diphosphate biosynthesis via DXP pathway; isopentenyl diphosphate from 1-deoxy-D-xylulose 5-phosphate: step 5/6. Functionally, converts 2C-methyl-D-erythritol 2,4-cyclodiphosphate (ME-2,4cPP) into 1-hydroxy-2-methyl-2-(E)-butenyl 4-diphosphate. This is 4-hydroxy-3-methylbut-2-en-1-yl diphosphate synthase (flavodoxin) from Pseudomonas putida (strain W619).